The chain runs to 203 residues: Ribonuclease HII (203 aa).

The RNase H type-2 domain occupies 15–201 (LLVAGLDEAG…VAQAPLRFPE (187 aa)). Asp-21, Glu-22, and Asp-111 together coordinate a divalent metal cation.

This sequence belongs to the RNase HII family. Mn(2+) serves as cofactor. Mg(2+) is required as a cofactor.

It is found in the cytoplasm. The enzyme catalyses Endonucleolytic cleavage to 5'-phosphomonoester.. Functionally, endonuclease that specifically degrades the RNA of RNA-DNA hybrids. In Thermus thermophilus (strain ATCC 27634 / DSM 579 / HB8), this protein is Ribonuclease HII.